The chain runs to 119 residues: Thrombin-like enzyme TLBan (119 aa).

Residues 1–112 (VIGGDECNIN…YLLWIQSIIA (112 aa)) enclose the Peptidase S1 domain. Residues His40 and Asp59 each act as charge relay system in the active site. Cys54 and Cys118 are disulfide-bonded.

In terms of assembly, monomer. Contains both N-linked carbohydrates and sialic acid. As to expression, expressed by the venom gland.

It is found in the secreted. Its activity is regulated as follows. Strongly inhibited by PMSF and slightly inhibited by EDTA and soybean trypsin inhibitor. In terms of biological role, thrombin-like snake venom serine protease, with high clotting activity in vitro. Also has fibrinogenolytic ability, showing a fast degradation of fibrinogen Aalpha chain (FGA), a slow degradation of Bbeta chain (FGB) and no degradation of gamma chain. Also causes platelet aggregation in platelet rich plasma (PRP) and washed platelet suspension. The protein is Thrombin-like enzyme TLBan of Bothrocophias andianus (Andean lancehead).